A 289-amino-acid polypeptide reads, in one-letter code: Shikimate dehydrogenase (NADP(+)) (289 aa).

Residues 22-24 (SRS) and Thr-69 each bind shikimate. Lys-73 (proton acceptor) is an active-site residue. Glu-85 lines the NADP(+) pocket. Shikimate is bound by residues Asn-94 and Asp-109. NADP(+) is bound by residues 134 to 138 (GAGGA), 158 to 163 (NRTLSR), and Ile-226. Tyr-228 is a binding site for shikimate. Gly-249 provides a ligand contact to NADP(+).

The protein belongs to the shikimate dehydrogenase family. In terms of assembly, homodimer.

The catalysed reaction is shikimate + NADP(+) = 3-dehydroshikimate + NADPH + H(+). The protein operates within metabolic intermediate biosynthesis; chorismate biosynthesis; chorismate from D-erythrose 4-phosphate and phosphoenolpyruvate: step 4/7. Its function is as follows. Involved in the biosynthesis of the chorismate, which leads to the biosynthesis of aromatic amino acids. Catalyzes the reversible NADPH linked reduction of 3-dehydroshikimate (DHSA) to yield shikimate (SA). In Brucella canis (strain ATCC 23365 / NCTC 10854 / RM-666), this protein is Shikimate dehydrogenase (NADP(+)).